The sequence spans 304 residues: Protease HtpX homolog (304 aa).

The next 2 membrane-spanning stretches (helical) occupy residues 14 to 34 (IFIILGFFIFVLMVGAAIGII) and 39 to 59 (YLNGLVLAAVIGAFYILIMVM). His-144 lines the Zn(2+) pocket. Glu-145 is a catalytic residue. Residue His-148 coordinates Zn(2+). 2 consecutive transmembrane segments (helical) span residues 159 to 179 (IAIALVAVIAILSDIAMRMIF) and 202 to 222 (AIIYIVALIFVILAPIIATAI). Glu-231 is a Zn(2+) binding site.

This sequence belongs to the peptidase M48B family. Zn(2+) is required as a cofactor.

It localises to the cell membrane. The chain is Protease HtpX homolog from Listeria monocytogenes serovar 1/2a (strain ATCC BAA-679 / EGD-e).